The sequence spans 178 residues: Cytochrome b6-f complex iron-sulfur subunit 1 (178 aa).

Residues leucine 17–alanine 36 form a helical membrane-spanning segment. One can recognise a Rieske domain in the interval glycine 61 to isoleucine 161. The [2Fe-2S] cluster site is built by cysteine 107, histidine 109, cysteine 125, and histidine 128. Cysteine 112 and cysteine 127 are joined by a disulfide.

This sequence belongs to the Rieske iron-sulfur protein family. In terms of assembly, the 4 large subunits of the cytochrome b6-f complex are cytochrome b6, subunit IV (17 kDa polypeptide, PetD), cytochrome f and the Rieske protein, while the 4 small subunits are PetG, PetL, PetM and PetN. The complex functions as a dimer. It depends on [2Fe-2S] cluster as a cofactor.

It localises to the cellular thylakoid membrane. The catalysed reaction is 2 oxidized [plastocyanin] + a plastoquinol + 2 H(+)(in) = 2 reduced [plastocyanin] + a plastoquinone + 4 H(+)(out). Component of the cytochrome b6-f complex, which mediates electron transfer between photosystem II (PSII) and photosystem I (PSI), cyclic electron flow around PSI, and state transitions. The chain is Cytochrome b6-f complex iron-sulfur subunit 1 from Synechocystis sp. (strain ATCC 27184 / PCC 6803 / Kazusa).